The chain runs to 59 residues: Cortexin domain containing 2 (59 aa).

Residues 20–40 traverse the membrane as a helical segment; that stretch reads FAIAFVVLVFVFLIVMVFRCV.

Its subcellular location is the membrane. This chain is Cortexin domain containing 2, found in Mus musculus (Mouse).